The primary structure comprises 177 residues: Large ribosomal subunit protein uL6 (177 aa).

This sequence belongs to the universal ribosomal protein uL6 family. As to quaternary structure, part of the 50S ribosomal subunit.

Its function is as follows. This protein binds to the 23S rRNA, and is important in its secondary structure. It is located near the subunit interface in the base of the L7/L12 stalk, and near the tRNA binding site of the peptidyltransferase center. The polypeptide is Large ribosomal subunit protein uL6 (Actinobacillus succinogenes (strain ATCC 55618 / DSM 22257 / CCUG 43843 / 130Z)).